Reading from the N-terminus, the 268-residue chain is Large ribosomal subunit protein bL9m (268 aa).

The transit peptide at 1–52 directs the protein to the mitochondrion; it reads MAAAAFAVPRGVQLRVLTERLLRGGVRELLRPRLSGSTPGSERDFSLSHSRG.

The protein belongs to the bacterial ribosomal protein bL9 family. As to quaternary structure, component of the mitochondrial ribosome large subunit (39S) which comprises a 16S rRNA and about 50 distinct proteins.

The protein resides in the mitochondrion. This is Large ribosomal subunit protein bL9m (MRPL9) from Bos taurus (Bovine).